Consider the following 398-residue polypeptide: 4-hydroxy-3-methylbut-2-enyl diphosphate reductase (398 aa).

A [4Fe-4S] cluster-binding site is contributed by Cys66. Residue His96 participates in (2E)-4-hydroxy-3-methylbut-2-enyl diphosphate binding. His96 provides a ligand contact to dimethylallyl diphosphate. His96 lines the isopentenyl diphosphate pocket. Position 157 (Cys157) interacts with [4Fe-4S] cluster. A (2E)-4-hydroxy-3-methylbut-2-enyl diphosphate-binding site is contributed by His185. His185 provides a ligand contact to dimethylallyl diphosphate. His185 serves as a coordination point for isopentenyl diphosphate. Glu187 acts as the Proton donor in catalysis. Thr250 lines the (2E)-4-hydroxy-3-methylbut-2-enyl diphosphate pocket. Cys288 provides a ligand contact to [4Fe-4S] cluster. The (2E)-4-hydroxy-3-methylbut-2-enyl diphosphate site is built by Ser317, Ser318, Asn319, and Ser379. Dimethylallyl diphosphate-binding residues include Ser317, Ser318, Asn319, and Ser379. Isopentenyl diphosphate-binding residues include Ser317, Ser318, Asn319, and Ser379.

It belongs to the IspH family. It depends on [4Fe-4S] cluster as a cofactor.

The enzyme catalyses isopentenyl diphosphate + 2 oxidized [2Fe-2S]-[ferredoxin] + H2O = (2E)-4-hydroxy-3-methylbut-2-enyl diphosphate + 2 reduced [2Fe-2S]-[ferredoxin] + 2 H(+). The catalysed reaction is dimethylallyl diphosphate + 2 oxidized [2Fe-2S]-[ferredoxin] + H2O = (2E)-4-hydroxy-3-methylbut-2-enyl diphosphate + 2 reduced [2Fe-2S]-[ferredoxin] + 2 H(+). The protein operates within isoprenoid biosynthesis; dimethylallyl diphosphate biosynthesis; dimethylallyl diphosphate from (2E)-4-hydroxy-3-methylbutenyl diphosphate: step 1/1. It functions in the pathway isoprenoid biosynthesis; isopentenyl diphosphate biosynthesis via DXP pathway; isopentenyl diphosphate from 1-deoxy-D-xylulose 5-phosphate: step 6/6. Catalyzes the conversion of 1-hydroxy-2-methyl-2-(E)-butenyl 4-diphosphate (HMBPP) into a mixture of isopentenyl diphosphate (IPP) and dimethylallyl diphosphate (DMAPP). Acts in the terminal step of the DOXP/MEP pathway for isoprenoid precursor biosynthesis. In Synechococcus sp. (strain CC9311), this protein is 4-hydroxy-3-methylbut-2-enyl diphosphate reductase.